A 146-amino-acid polypeptide reads, in one-letter code: Hemoglobin subunit beta (146 aa).

In terms of domain architecture, Globin spans 2-146 (HWTAEEKQLI…VAHALARKYH (145 aa)). The heme b site is built by His63 and His92.

The protein belongs to the globin family. As to quaternary structure, heterotetramer of two alpha chains and two beta chains. As to expression, red blood cells.

Its function is as follows. Involved in oxygen transport from the lung to the various peripheral tissues. In Phalacrocorax carbo (Great cormorant), this protein is Hemoglobin subunit beta (HBB).